The following is a 352-amino-acid chain: Quinolinate synthase (352 aa).

Iminosuccinate is bound by residues His-55 and Ser-72. [4Fe-4S] cluster is bound at residue Cys-117. Residues 143–145 (YVN) and Ser-160 contribute to the iminosuccinate site. [4Fe-4S] cluster is bound at residue Cys-204. Iminosuccinate contacts are provided by residues 230-232 (HPE) and Thr-258. Cys-303 contributes to the [4Fe-4S] cluster binding site.

It belongs to the quinolinate synthase family. Type 2 subfamily. [4Fe-4S] cluster is required as a cofactor.

The protein resides in the cytoplasm. It carries out the reaction iminosuccinate + dihydroxyacetone phosphate = quinolinate + phosphate + 2 H2O + H(+). Its pathway is cofactor biosynthesis; NAD(+) biosynthesis; quinolinate from iminoaspartate: step 1/1. In terms of biological role, catalyzes the condensation of iminoaspartate with dihydroxyacetone phosphate to form quinolinate. In Mycobacterium leprae (strain Br4923), this protein is Quinolinate synthase.